The sequence spans 450 residues: Cysteine protease ATG4C (450 aa).

The active-site Nucleophile is Cys-112. Active-site residues include Asp-336 and His-338.

Belongs to the peptidase C54 family.

The protein resides in the cytoplasm. The catalysed reaction is [protein]-C-terminal L-amino acid-glycyl-phosphatidylethanolamide + H2O = [protein]-C-terminal L-amino acid-glycine + a 1,2-diacyl-sn-glycero-3-phosphoethanolamine. Cysteine protease that plays a key role in autophagy by mediating both proteolytic activation and delipidation of ATG8 family proteins. The protease activity is required for proteolytic activation of ATG8 family proteins: cleaves the C-terminal amino acid of ATG8 proteins to reveal a C-terminal glycine. Exposure of the glycine at the C-terminus is essential for ATG8 proteins conjugation to phosphatidylethanolamine (PE) and insertion to membranes, which is necessary for autophagy. In addition to the protease activity, also mediates delipidation of ATG8 family proteins. Catalyzes delipidation of PE-conjugated forms of ATG8 proteins during macroautophagy. The sequence is that of Cysteine protease ATG4C from Xenopus laevis (African clawed frog).